A 175-amino-acid polypeptide reads, in one-letter code: NADH-ubiquinone oxidoreductase chain 6 (175 aa).

5 consecutive transmembrane segments (helical) span residues 1–21 (MMTY…VGFS), 25–45 (SPIY…GIVL), 47–67 (FGGS…MMVV), 88–108 (VVLG…YYVL), and 149–169 (YGTW…VVIM).

Belongs to the complex I subunit 6 family. As to quaternary structure, core subunit of respiratory chain NADH dehydrogenase (Complex I) which is composed of 45 different subunits.

It localises to the mitochondrion inner membrane. It catalyses the reaction a ubiquinone + NADH + 5 H(+)(in) = a ubiquinol + NAD(+) + 4 H(+)(out). Functionally, core subunit of the mitochondrial membrane respiratory chain NADH dehydrogenase (Complex I) which catalyzes electron transfer from NADH through the respiratory chain, using ubiquinone as an electron acceptor. Essential for the catalytic activity and assembly of complex I. The polypeptide is NADH-ubiquinone oxidoreductase chain 6 (MT-ND6) (Ovis aries (Sheep)).